Consider the following 487-residue polypeptide: Bifunctional cytokinin biosynthesis protein (487 aa).

The adenylate isopentenyltransferase stretch occupies residues 1–266; that stretch reads MESTNRFMIG…RMASDFCYAS (266 aa). A cytokinin riboside 5'-monophosphate phosphoribohydrolase region spans residues 267–487; the sequence is TSISFHPINE…FSRKGELEWV (221 aa). Substrate-binding positions include E352, 380-381, 403-409, and T415; these read RK and GYGTLEE.

In the N-terminal section; belongs to the IPP transferase family. The protein in the C-terminal section; belongs to the LOG family.

The catalysed reaction is dimethylallyl diphosphate + AMP = N(6)-(dimethylallyl)adenosine 5'-phosphate + diphosphate. It carries out the reaction N(6)-(dimethylallyl)adenosine 5'-phosphate + H2O = N(6)-dimethylallyladenine + D-ribose 5-phosphate. The enzyme catalyses 9-ribosyl-trans-zeatin 5'-phosphate + H2O = trans-zeatin + D-ribose 5-phosphate. It participates in secondary metabolite biosynthesis. Its function is as follows. Bifunctional cytokinin synthesis protein; part of the gene cluster that mediates the biosynthesis of cytokinins such as fusatin, fusatinic acids or 8-oxofusatin, known for their growth promoting and anti-senescence activities toward host plants. FCK1 is a bifunctional enzyme that performs the first steps in the biosynthesis of Fusarium cytokinins. It first condenses adenosine monophosphate (AMP) with dimethylallyl diphosphate (DMAPP) to yield isoprenyl adenosine monophosphate. It then catalyzes the removal of the phosphoribose to produce isopentenylaldehyde. The cytochrome P450 monooxygenase then converts isopentenylaldehyde to trans-zeatin. A condensation step converts trans-zeatin to fusatin which is further modified to produce fusatinic acid. The mechanism for oxidation of fusatin to fusatinic acid remains unknown. 8-oxofusatin could be produced through several pathways, via direct oxygenation of fusatin, or via the 8-oxo-pentenyladenine intermediate which itself must arise from either the prenylation of 8-oxo-AMP by FCK1 and/or oxygenation of isopentenylaldehyde. Both the FCK3 and FCK4 enzymes act downstream of the identified cytokinins to produce yet unidentified compounds. The chain is Bifunctional cytokinin biosynthesis protein from Fusarium pseudograminearum (strain CS3096) (Wheat and barley crown-rot fungus).